Here is a 329-residue protein sequence, read N- to C-terminus: Eukaryotic translation initiation factor 2 subunit 1 (329 aa).

Residues 24–95 (DDLIMVKVNR…QKGYIDLSKR (72 aa)) enclose the S1 motif domain. The residue at position 59 (Ser59) is a Phosphoserine; by eIK1, eIK2 and PK4. The segment at 291–329 (LDKHDGISSDDDDYNTSDEDDENSSEEDENTSEDEEEED) is disordered. The segment covering 298–329 (SSDDDDYNTSDEDDENSSEEDENTSEDEEEED) has biased composition (acidic residues).

Belongs to the eIF-2-alpha family. Phosphorylated at Ser-59 by eIK1 in response to amino acid starvation. Phosphorylates at Ser-59 in schizonts and gametocytes but not in rings and young trophozoites. Phosphorylates at Ser-59 by eIK2 in salivary gland sporozoites but not in midgut and hemocoel sporozoites. Dephosphorylated at Ser-59 by UIS2. Phosphorylation of eIF2alpha subunit of the pre-initiation complex eIF2 inhibits recycling of inactive eIF2-GDP to active eIF2-GTP by limiting the activity of the guanine nucleotide exchange factor eIF2B and thus, inhibits protein translation.

It is found in the cytoplasm. The protein localises to the stress granule. Its function is as follows. Functions in the early steps of protein synthesis by forming a ternary complex with GTP and initiator tRNA. May regulate protein translation in response to amino acid starvation. May regulate protein at various stages of parasite development. This Plasmodium falciparum (isolate 3D7) protein is Eukaryotic translation initiation factor 2 subunit 1.